The following is a 272-amino-acid chain: Imidazole glycerol phosphate synthase subunit HisF (272 aa).

Residues aspartate 11 and aspartate 130 contribute to the active site.

This sequence belongs to the HisA/HisF family. As to quaternary structure, heterodimer of HisH and HisF.

The protein localises to the cytoplasm. It carries out the reaction 5-[(5-phospho-1-deoxy-D-ribulos-1-ylimino)methylamino]-1-(5-phospho-beta-D-ribosyl)imidazole-4-carboxamide + L-glutamine = D-erythro-1-(imidazol-4-yl)glycerol 3-phosphate + 5-amino-1-(5-phospho-beta-D-ribosyl)imidazole-4-carboxamide + L-glutamate + H(+). The protein operates within amino-acid biosynthesis; L-histidine biosynthesis; L-histidine from 5-phospho-alpha-D-ribose 1-diphosphate: step 5/9. IGPS catalyzes the conversion of PRFAR and glutamine to IGP, AICAR and glutamate. The HisF subunit catalyzes the cyclization activity that produces IGP and AICAR from PRFAR using the ammonia provided by the HisH subunit. The polypeptide is Imidazole glycerol phosphate synthase subunit HisF (Methanococcus vannielii (strain ATCC 35089 / DSM 1224 / JCM 13029 / OCM 148 / SB)).